Consider the following 106-residue polypeptide: uncharacterized protein (106 aa).

2 disordered regions span residues 33 to 64 and 87 to 106; these read FKTS…SRND and NLTG…AVSK. Basic and acidic residues predominate over residues 52 to 63; sequence DGKKQESLESRN. Residues 87 to 99 are compositionally biased toward polar residues; sequence NLTGLESGGSSPP.

It localises to the mitochondrion. This is an uncharacterized protein from Arabidopsis thaliana (Mouse-ear cress).